The following is a 141-amino-acid chain: Nucleoside diphosphate kinase (141 aa).

ATP is bound by residues Lys9, Phe57, Arg85, Thr91, Arg102, and Asn112. Residue His115 is the Pros-phosphohistidine intermediate of the active site.

The protein belongs to the NDK family. Homotetramer. Requires Mg(2+) as cofactor.

The protein localises to the cytoplasm. The catalysed reaction is a 2'-deoxyribonucleoside 5'-diphosphate + ATP = a 2'-deoxyribonucleoside 5'-triphosphate + ADP. It carries out the reaction a ribonucleoside 5'-diphosphate + ATP = a ribonucleoside 5'-triphosphate + ADP. In terms of biological role, major role in the synthesis of nucleoside triphosphates other than ATP. The ATP gamma phosphate is transferred to the NDP beta phosphate via a ping-pong mechanism, using a phosphorylated active-site intermediate. This Chlamydia trachomatis serovar A (strain ATCC VR-571B / DSM 19440 / HAR-13) protein is Nucleoside diphosphate kinase.